Consider the following 404-residue polypeptide: Cysteine desulfurase IscS (404 aa).

Residues 75 to 76 (AT), Asn-155, Gln-183, and 203 to 205 (SAH) contribute to the pyridoxal 5'-phosphate site. Lys-206 bears the N6-(pyridoxal phosphate)lysine mark. Residue Thr-243 coordinates pyridoxal 5'-phosphate. Catalysis depends on Cys-328, which acts as the Cysteine persulfide intermediate. Cys-328 provides a ligand contact to [2Fe-2S] cluster.

Belongs to the class-V pyridoxal-phosphate-dependent aminotransferase family. NifS/IscS subfamily. Homodimer. Forms a heterotetramer with IscU, interacts with other sulfur acceptors. Requires pyridoxal 5'-phosphate as cofactor.

It is found in the cytoplasm. The enzyme catalyses (sulfur carrier)-H + L-cysteine = (sulfur carrier)-SH + L-alanine. It functions in the pathway cofactor biosynthesis; iron-sulfur cluster biosynthesis. Functionally, master enzyme that delivers sulfur to a number of partners involved in Fe-S cluster assembly, tRNA modification or cofactor biosynthesis. Catalyzes the removal of elemental sulfur atoms from cysteine to produce alanine. Functions as a sulfur delivery protein for Fe-S cluster synthesis onto IscU, an Fe-S scaffold assembly protein, as well as other S acceptor proteins. This chain is Cysteine desulfurase IscS, found in Vibrio campbellii (strain ATCC BAA-1116).